The sequence spans 309 residues: Ribonuclease Z (309 aa).

Residues histidine 63, histidine 65, aspartate 67, histidine 68, histidine 145, aspartate 216, and histidine 274 each coordinate Zn(2+). The Proton acceptor role is filled by aspartate 67.

It belongs to the RNase Z family. Homodimer. It depends on Zn(2+) as a cofactor.

It carries out the reaction Endonucleolytic cleavage of RNA, removing extra 3' nucleotides from tRNA precursor, generating 3' termini of tRNAs. A 3'-hydroxy group is left at the tRNA terminus and a 5'-phosphoryl group is left at the trailer molecule.. Functionally, zinc phosphodiesterase, which displays some tRNA 3'-processing endonuclease activity. Probably involved in tRNA maturation, by removing a 3'-trailer from precursor tRNA. The polypeptide is Ribonuclease Z (Streptococcus pyogenes serotype M1).